The following is a 283-amino-acid chain: Thymidylate synthase (283 aa).

Position 22 (arginine 22) interacts with dUMP. Catalysis depends on cysteine 160, which acts as the Nucleophile. DUMP contacts are provided by residues 180-183, asparagine 191, and 221-223; these read RSCD and HIY. (6R)-5,10-methylene-5,6,7,8-tetrahydrofolate is bound at residue aspartate 183. A (6R)-5,10-methylene-5,6,7,8-tetrahydrofolate-binding site is contributed by serine 282.

The protein belongs to the thymidylate synthase family. Bacterial-type ThyA subfamily. Homodimer.

Its subcellular location is the cytoplasm. The catalysed reaction is dUMP + (6R)-5,10-methylene-5,6,7,8-tetrahydrofolate = 7,8-dihydrofolate + dTMP. The protein operates within pyrimidine metabolism; dTTP biosynthesis. In terms of biological role, catalyzes the reductive methylation of 2'-deoxyuridine-5'-monophosphate (dUMP) to 2'-deoxythymidine-5'-monophosphate (dTMP) while utilizing 5,10-methylenetetrahydrofolate (mTHF) as the methyl donor and reductant in the reaction, yielding dihydrofolate (DHF) as a by-product. This enzymatic reaction provides an intracellular de novo source of dTMP, an essential precursor for DNA biosynthesis. The polypeptide is Thymidylate synthase (Aliivibrio fischeri (strain ATCC 700601 / ES114) (Vibrio fischeri)).